The following is a 353-amino-acid chain: Photosystem II D2 protein (353 aa).

At threonine 2 the chain carries N-acetylthreonine. Threonine 2 carries the phosphothreonine modification. Residues 41-61 (CAYFALGGWFTGTTFVTSWYT) form a helical membrane-spanning segment. Histidine 118 serves as a coordination point for chlorophyll a. The helical transmembrane segment at 125–141 (GFMLRQFELARSVQLRP) threads the bilayer. Residues glutamine 130 and asparagine 143 each coordinate pheophytin a. Residues 153 to 166 (VFVSVFLIYPLGQS) traverse the membrane as a helical segment. Histidine 198 is a chlorophyll a binding site. The helical transmembrane segment at 208-228 (AALLCAIHGATVENTLFEDGD) threads the bilayer. Residues histidine 215 and phenylalanine 262 each coordinate a plastoquinone. Residue histidine 215 coordinates Fe cation. Residue histidine 269 coordinates Fe cation. A helical transmembrane segment spans residues 279–295 (GLWMSAIGVVGLALNLR).

The protein belongs to the reaction center PufL/M/PsbA/D family. As to quaternary structure, PSII is composed of 1 copy each of membrane proteins PsbA, PsbB, PsbC, PsbD, PsbE, PsbF, PsbH, PsbI, PsbJ, PsbK, PsbL, PsbM, PsbT, PsbX, PsbY, PsbZ, Psb30/Ycf12, at least 3 peripheral proteins of the oxygen-evolving complex and a large number of cofactors. It forms dimeric complexes. The D1/D2 heterodimer binds P680, chlorophylls that are the primary electron donor of PSII, and subsequent electron acceptors. It shares a non-heme iron and each subunit binds pheophytin, quinone, additional chlorophylls, carotenoids and lipids. There is also a Cl(-1) ion associated with D1 and D2, which is required for oxygen evolution. The PSII complex binds additional chlorophylls, carotenoids and specific lipids. serves as cofactor.

The protein resides in the plastid. It localises to the chloroplast thylakoid membrane. The catalysed reaction is 2 a plastoquinone + 4 hnu + 2 H2O = 2 a plastoquinol + O2. Its function is as follows. Photosystem II (PSII) is a light-driven water:plastoquinone oxidoreductase that uses light energy to abstract electrons from H(2)O, generating O(2) and a proton gradient subsequently used for ATP formation. It consists of a core antenna complex that captures photons, and an electron transfer chain that converts photonic excitation into a charge separation. The D1/D2 (PsbA/PsbD) reaction center heterodimer binds P680, the primary electron donor of PSII as well as several subsequent electron acceptors. D2 is needed for assembly of a stable PSII complex. This chain is Photosystem II D2 protein, found in Drimys granadensis.